A 476-amino-acid chain; its full sequence is UDP-N-acetylmuramate--L-alanine ligase (476 aa).

123–129 (GTHGKTT) contacts ATP.

Belongs to the MurCDEF family.

It is found in the cytoplasm. The catalysed reaction is UDP-N-acetyl-alpha-D-muramate + L-alanine + ATP = UDP-N-acetyl-alpha-D-muramoyl-L-alanine + ADP + phosphate + H(+). The protein operates within cell wall biogenesis; peptidoglycan biosynthesis. In terms of biological role, cell wall formation. The sequence is that of UDP-N-acetylmuramate--L-alanine ligase from Nitrosococcus oceani (strain ATCC 19707 / BCRC 17464 / JCM 30415 / NCIMB 11848 / C-107).